Here is a 338-residue protein sequence, read N- to C-terminus: CDP-paratose 2-epimerase (338 aa).

Residue threonine 124 coordinates substrate. Residue tyrosine 164 is the Proton acceptor of the active site.

It belongs to the NAD(P)-dependent epimerase/dehydratase family. In terms of assembly, homotetramer. NAD(+) serves as cofactor.

The enzyme catalyses CDP-alpha-D-paratose = CDP-3,6-dideoxy-alpha-D-mannose. It functions in the pathway nucleotide-sugar biosynthesis; CDP-3,6-dideoxy-D-mannose biosynthesis; CDP-3,6-dideoxy-D-mannose from CTP and alpha-D-glucose 1-phosphate: step 5/5. In terms of biological role, catalyzes the isomeration of CDP-paratose to CDP-tyvelose. The polypeptide is CDP-paratose 2-epimerase (rfbE) (Salmonella typhi).